The primary structure comprises 205 residues: ATP-dependent Clp protease proteolytic subunit (205 aa).

Residue Ser109 is the Nucleophile of the active site. Residue His134 is part of the active site.

This sequence belongs to the peptidase S14 family. As to quaternary structure, fourteen ClpP subunits assemble into 2 heptameric rings which stack back to back to give a disk-like structure with a central cavity, resembling the structure of eukaryotic proteasomes.

It is found in the cytoplasm. The catalysed reaction is Hydrolysis of proteins to small peptides in the presence of ATP and magnesium. alpha-casein is the usual test substrate. In the absence of ATP, only oligopeptides shorter than five residues are hydrolyzed (such as succinyl-Leu-Tyr-|-NHMec, and Leu-Tyr-Leu-|-Tyr-Trp, in which cleavage of the -Tyr-|-Leu- and -Tyr-|-Trp bonds also occurs).. In terms of biological role, cleaves peptides in various proteins in a process that requires ATP hydrolysis. Has a chymotrypsin-like activity. Plays a major role in the degradation of misfolded proteins. This is ATP-dependent Clp protease proteolytic subunit from Buchnera aphidicola subsp. Baizongia pistaciae (strain Bp).